The following is a 321-amino-acid chain: Lipoyl synthase (321 aa).

Positions 68, 73, 79, 94, 98, 101, and 308 each coordinate [4Fe-4S] cluster. The region spanning 80–297 is the Radical SAM core domain; sequence FNHGTATFMI…KEVALELGFT (218 aa).

It belongs to the radical SAM superfamily. Lipoyl synthase family. [4Fe-4S] cluster serves as cofactor.

It localises to the cytoplasm. The enzyme catalyses [[Fe-S] cluster scaffold protein carrying a second [4Fe-4S](2+) cluster] + N(6)-octanoyl-L-lysyl-[protein] + 2 oxidized [2Fe-2S]-[ferredoxin] + 2 S-adenosyl-L-methionine + 4 H(+) = [[Fe-S] cluster scaffold protein] + N(6)-[(R)-dihydrolipoyl]-L-lysyl-[protein] + 4 Fe(3+) + 2 hydrogen sulfide + 2 5'-deoxyadenosine + 2 L-methionine + 2 reduced [2Fe-2S]-[ferredoxin]. It participates in protein modification; protein lipoylation via endogenous pathway; protein N(6)-(lipoyl)lysine from octanoyl-[acyl-carrier-protein]: step 2/2. Its function is as follows. Catalyzes the radical-mediated insertion of two sulfur atoms into the C-6 and C-8 positions of the octanoyl moiety bound to the lipoyl domains of lipoate-dependent enzymes, thereby converting the octanoylated domains into lipoylated derivatives. The chain is Lipoyl synthase from Vibrio parahaemolyticus serotype O3:K6 (strain RIMD 2210633).